A 206-amino-acid chain; its full sequence is Cytochrome b6-f complex iron-sulfur subunit, chloroplastic (206 aa).

The transit peptide at 1–29 (MAMLSSRRVAAPAKASAIRRSRVMPVVRA) directs the protein to the chloroplast. Residues 39-68 (MNKRNIMNLILAGGAGLPITTLALGYGAFF) form a helical membrane-spanning segment. One can recognise a Rieske domain in the interval 92–188 (AGEWLKTHLA…CDVAESGLVT (97 aa)). [2Fe-2S] cluster-binding residues include C134, H136, C152, and H155. C139 and C154 are oxidised to a cystine.

This sequence belongs to the Rieske iron-sulfur protein family. In terms of assembly, the 4 large subunits of the cytochrome b6-f complex are cytochrome b6, subunit IV (17 kDa polypeptide, petD), cytochrome f and the Rieske protein, while the 4 small subunits are petG, petL, petM and petN. The complex functions as a dimer. It depends on [2Fe-2S] cluster as a cofactor.

Its subcellular location is the plastid. The protein resides in the chloroplast thylakoid membrane. The enzyme catalyses 2 oxidized [plastocyanin] + a plastoquinol + 2 H(+)(in) = 2 reduced [plastocyanin] + a plastoquinone + 4 H(+)(out). Its function is as follows. Component of the cytochrome b6-f complex, which mediates electron transfer between photosystem II (PSII) and photosystem I (PSI), cyclic electron flow around PSI, and state transitions. The protein is Cytochrome b6-f complex iron-sulfur subunit, chloroplastic (petC) of Chlamydomonas reinhardtii (Chlamydomonas smithii).